A 273-amino-acid polypeptide reads, in one-letter code: Oxidation resistance protein 1 (273 aa).

At Met-1 the chain carries N-acetylmethionine. A compositionally biased stretch (low complexity) spans 18–33 (TDSSDSTAYTTASESS). Disordered stretches follow at residues 18–48 (TDSS…NKTT) and 177–197 (ISEK…GDKE). A compositionally biased stretch (basic and acidic residues) spans 37–48 (KDSHNPFRNKTT). The TLDc domain maps to 74-273 (KLLTPEMCDE…IVALEVWRVG (200 aa)). Ser-178 is modified (phosphoserine).

The protein belongs to the OXR1 family.

Its subcellular location is the mitochondrion. In terms of biological role, involved in protection from oxidative damage. This chain is Oxidation resistance protein 1 (OXR1), found in Saccharomyces cerevisiae (strain ATCC 204508 / S288c) (Baker's yeast).